Here is a 58-residue protein sequence, read N- to C-terminus: Small ribosomal subunit protein eS31 (58 aa).

Positions 29, 32, 48, and 51 each coordinate Zn(2+). The segment at 29 to 51 (CPRCGSFMAHHLKPVPRWHCGKC) adopts a C4-type zinc-finger fold.

The protein belongs to the eukaryotic ribosomal protein eS31 family. In terms of assembly, part of the 30S ribosomal subunit. Zn(2+) serves as cofactor.

In Ignicoccus hospitalis (strain KIN4/I / DSM 18386 / JCM 14125), this protein is Small ribosomal subunit protein eS31.